A 376-amino-acid chain; its full sequence is Flagellar P-ring protein (376 aa).

Positions 1–29 (MTQRPFSLLSHLGRICLAAAMLAALPAQA) are cleaved as a signal peptide.

It belongs to the FlgI family. In terms of assembly, the basal body constitutes a major portion of the flagellar organelle and consists of four rings (L,P,S, and M) mounted on a central rod.

It localises to the periplasm. The protein localises to the bacterial flagellum basal body. Functionally, assembles around the rod to form the L-ring and probably protects the motor/basal body from shearing forces during rotation. The sequence is that of Flagellar P-ring protein from Bordetella avium (strain 197N).